A 143-amino-acid chain; its full sequence is Regulator of ribonuclease activity B (143 aa).

A disordered region spans residues 113–143; that stretch reads EDPNAEEDEYGDDGEFFDDEDEADFNNAKVH. Over residues 115 to 136 the composition is skewed to acidic residues; it reads PNAEEDEYGDDGEFFDDEDEAD.

The protein belongs to the RraB family. Interacts with the C-terminal region of Rne.

Its subcellular location is the cytoplasm. In terms of biological role, globally modulates RNA abundance by binding to RNase E (Rne) and regulating its endonucleolytic activity. Can modulate Rne action in a substrate-dependent manner by altering the composition of the degradosome. In Haemophilus ducreyi (strain 35000HP / ATCC 700724), this protein is Regulator of ribonuclease activity B.